Consider the following 397-residue polypeptide: DNA excision repair protein ERCC-8 (397 aa).

5 WD repeats span residues 41–81 (IHCS…RQPY), 97–137 (VHKY…IADV), 184–224 (GHRQ…GCLI), 243–282 (AHNGKVNGLCFTSDGLHLLTVGTDNRMRLWNSSNGENTLV), and 332–371 (GHYKSVDCCVFQSNFQELYSGSRDCNILAWVPSLCESVPD). The disordered stretch occupies residues 370–397 (PDDDDETSTRSQLNPAFEDAWSSSDEEG). 3 positions are modified to phosphoserine: S391, S392, and S393.

In terms of assembly, part of the CSA complex (also named DCX(ERCC8) complex), a DCX E3 ubiquitin-protein ligase complex containing ERCC8, RBX1, DDB1 and CUL4A; the CSA complex interacts with RNA polymerase II; upon UV irradiation it interacts with the COP9 signalosome and preferentially with the hyperphosphorylated form of RNA polymerase II. Interacts with ERCC6/CSB (via CIM motif); promoting recruitment to lesion-stalled RNA polymerase II (Pol II). Interacts with KIAA1530/UVSSA. Interacts with a subunit of RNA polymerase II TFIIH.

Its subcellular location is the nucleus. It is found in the chromosome. It localises to the nucleus matrix. It participates in protein modification; protein ubiquitination. Functionally, substrate-recognition component of the CSA complex, a DCX (DDB1-CUL4-X-box) E3 ubiquitin-protein ligase complex, involved in transcription-coupled nucleotide excision repair (TC-NER), a process during which RNA polymerase II-blocking lesions are rapidly removed from the transcribed strand of active genes. Following recruitment to lesion-stalled RNA polymerase II (Pol II), the CSA complex mediates ubiquitination of Pol II subunit POLR2A/RPB1 at 'Lys-1268', a critical TC-NER checkpoint, governing RNA Pol II stability and initiating DNA damage excision by TFIIH recruitment. The CSA complex also promotes the ubiquitination and subsequent proteasomal degradation of ERCC6/CSB in a UV-dependent manner; ERCC6 degradation is essential for the recovery of RNA synthesis after transcription-coupled repair. Also plays a role in DNA double-strand breaks (DSSBs) repair by non-homologous end joining (NHEJ). The sequence is that of DNA excision repair protein ERCC-8 (ERCC8) from Bos taurus (Bovine).